A 296-amino-acid polypeptide reads, in one-letter code: Cytidine deaminase (296 aa).

CMP/dCMP-type deaminase domains follow at residues 47 to 167 (TEAE…FGPK) and 186 to 296 (DSAD…IDPV). Residue 88 to 90 (NLE) coordinates substrate. Residue His-101 coordinates Zn(2+). Glu-103 acts as the Proton donor in catalysis. Cys-128 and Cys-131 together coordinate Zn(2+).

Belongs to the cytidine and deoxycytidylate deaminase family. As to quaternary structure, homodimer. The cofactor is Zn(2+).

It catalyses the reaction cytidine + H2O + H(+) = uridine + NH4(+). The enzyme catalyses 2'-deoxycytidine + H2O + H(+) = 2'-deoxyuridine + NH4(+). This enzyme scavenges exogenous and endogenous cytidine and 2'-deoxycytidine for UMP synthesis. In Shewanella baltica (strain OS155 / ATCC BAA-1091), this protein is Cytidine deaminase.